We begin with the raw amino-acid sequence, 350 residues long: Twinfilin-1 (350 aa).

N-acetylserine is present on serine 2. Positions 2-139 (SHQTGIQASE…SLHGYKKYLL (138 aa)) constitute an ADF-H 1 domain. Residues serine 143 and serine 277 each carry the phosphoserine modification. An ADF-H 2 domain is found at 175 to 313 (LQGVAFPISR…TADFLYEEVH (139 aa)). Tyrosine 309 bears the Phosphotyrosine mark. Residues 316–350 (QHAHKQSFAKPKGPAGKRGIRRLIRGPAETEATTD) are disordered. Threonine 349 is subject to Phosphothreonine.

It belongs to the actin-binding proteins ADF family. Twinfilin subfamily. In terms of assembly, interacts with G-actin; ADP-actin form and capping protein (CP). May also be able to interact with TWF2 and phosphoinositides, PI(4,5)P2. When bound to PI(4,5)P2, it is down-regulated. Interacts with ACTG1. Post-translationally, phosphorylated on serine and threonine residues. In terms of tissue distribution, expressed at high levels in the colon, testis, ovary, prostate and lung. Expressed at lower levels in the brain, bladder and heart. Not detected in liver.

Its subcellular location is the cytoplasm. It is found in the cytoskeleton. Actin-binding protein involved in motile and morphological processes. Inhibits actin polymerization, likely by sequestering G-actin. By capping the barbed ends of filaments, it also regulates motility. Seems to play an important role in clathrin-mediated endocytosis and distribution of endocytic organelles. The chain is Twinfilin-1 (TWF1) from Homo sapiens (Human).